The sequence spans 188 residues: Acireductone dioxygenase (188 aa).

The Fe(2+) site is built by H97, H99, E103, and H141. Residues H97, H99, E103, and H141 each coordinate Ni(2+).

The protein belongs to the acireductone dioxygenase (ARD) family. As to quaternary structure, monomer. It depends on Fe(2+) as a cofactor. Requires Ni(2+) as cofactor.

It carries out the reaction 1,2-dihydroxy-5-(methylsulfanyl)pent-1-en-3-one + O2 = 3-(methylsulfanyl)propanoate + CO + formate + 2 H(+). It catalyses the reaction 1,2-dihydroxy-5-(methylsulfanyl)pent-1-en-3-one + O2 = 4-methylsulfanyl-2-oxobutanoate + formate + 2 H(+). It participates in amino-acid biosynthesis; L-methionine biosynthesis via salvage pathway; L-methionine from S-methyl-5-thio-alpha-D-ribose 1-phosphate: step 5/6. In terms of biological role, catalyzes 2 different reactions between oxygen and the acireductone 1,2-dihydroxy-3-keto-5-methylthiopentene (DHK-MTPene) depending upon the metal bound in the active site. Fe-containing acireductone dioxygenase (Fe-ARD) produces formate and 2-keto-4-methylthiobutyrate (KMTB), the alpha-ketoacid precursor of methionine in the methionine recycle pathway. Ni-containing acireductone dioxygenase (Ni-ARD) produces methylthiopropionate, carbon monoxide and formate, and does not lie on the methionine recycle pathway. The sequence is that of Acireductone dioxygenase from Xylella fastidiosa (strain 9a5c).